Here is a 349-residue protein sequence, read N- to C-terminus: Cobalt-precorrin-5B C(1)-methyltransferase (349 aa).

It belongs to the CbiD family.

It carries out the reaction Co-precorrin-5B + S-adenosyl-L-methionine = Co-precorrin-6A + S-adenosyl-L-homocysteine. It functions in the pathway cofactor biosynthesis; adenosylcobalamin biosynthesis; cob(II)yrinate a,c-diamide from sirohydrochlorin (anaerobic route): step 6/10. In terms of biological role, catalyzes the methylation of C-1 in cobalt-precorrin-5B to form cobalt-precorrin-6A. The protein is Cobalt-precorrin-5B C(1)-methyltransferase of Saccharolobus islandicus (strain M.16.27) (Sulfolobus islandicus).